The sequence spans 377 residues: Nitric oxide reductase FlRd-NAD(+) reductase (377 aa).

Belongs to the FAD-dependent oxidoreductase family. It depends on FAD as a cofactor.

It is found in the cytoplasm. The enzyme catalyses 2 reduced [nitric oxide reductase rubredoxin domain] + NAD(+) + H(+) = 2 oxidized [nitric oxide reductase rubredoxin domain] + NADH. It functions in the pathway nitrogen metabolism; nitric oxide reduction. Functionally, one of at least two accessory proteins for anaerobic nitric oxide (NO) reductase. Reduces the rubredoxin moiety of NO reductase. The sequence is that of Nitric oxide reductase FlRd-NAD(+) reductase from Salmonella gallinarum (strain 287/91 / NCTC 13346).